The sequence spans 531 residues: Membrane protein insertase YidC (531 aa).

4 consecutive transmembrane segments (helical) span residues Ala5–Pro25, Gly343–Leu363, Leu415–Ile435, and Pro489–Val509.

This sequence belongs to the OXA1/ALB3/YidC family. Type 1 subfamily. Interacts with the Sec translocase complex via SecD. Specifically interacts with transmembrane segments of nascent integral membrane proteins during membrane integration.

The protein localises to the cell inner membrane. In terms of biological role, required for the insertion and/or proper folding and/or complex formation of integral membrane proteins into the membrane. Involved in integration of membrane proteins that insert both dependently and independently of the Sec translocase complex, as well as at least some lipoproteins. Aids folding of multispanning membrane proteins. The protein is Membrane protein insertase YidC of Geobacter sulfurreducens (strain ATCC 51573 / DSM 12127 / PCA).